A 217-amino-acid polypeptide reads, in one-letter code: Large ribosomal subunit protein uL3 (217 aa).

It belongs to the universal ribosomal protein uL3 family. In terms of assembly, part of the 50S ribosomal subunit. Forms a cluster with proteins L14 and L19.

Its function is as follows. One of the primary rRNA binding proteins, it binds directly near the 3'-end of the 23S rRNA, where it nucleates assembly of the 50S subunit. This chain is Large ribosomal subunit protein uL3, found in Mycobacterium bovis (strain ATCC BAA-935 / AF2122/97).